Here is a 73-residue protein sequence, read N- to C-terminus: Homeodomain-only protein (73 aa).

Positions Ala3–Glu62 form a DNA-binding region, homeobox; degenerate.

Interacts with serum response factor (SRF). Component of a large complex containing histone deacetylases such as HDAC2. Interacts with the acetylated forms of HSPA1A and HSPA1B. Interacts with HSPA8.

The protein resides in the nucleus. Its subcellular location is the cytoplasm. Its function is as follows. Atypical homeodomain protein which does not bind DNA and is required to modulate cardiac growth and development. Acts via its interaction with SRF, thereby modulating the expression of SRF-dependent cardiac-specific genes and cardiac development. Prevents SRF-dependent transcription either by inhibiting SRF binding to DNA or by recruiting histone deacetylase (HDAC) proteins that prevent transcription by SRF. Overexpression causes cardiac hypertrophy. Acts as a co-chaperone for HSPA1A and HSPA1B chaperone proteins and assists in chaperone-mediated protein refolding. The sequence is that of Homeodomain-only protein (HOPX) from Sus scrofa (Pig).